The chain runs to 836 residues: V-type proton ATPase subunit C (836 aa).

A compositionally biased stretch (basic residues) spans 116-144 (LSLRHQRKHQHTHHQNKPQHYHHHHHHHQ). Disordered regions lie at residues 116–169 (LSLR…ASAP), 302–403 (APTT…SVQS), 415–453 (KPKR…QNHN), and 496–544 (PSQL…PLSP). Residues 160–169 (ATPPAPASAP) show a composition bias toward pro residues. A compositionally biased stretch (low complexity) spans 302-316 (APTTSSSVHSSMSRS). Polar residues-rich tracts occupy residues 319–348 (KRLN…HLAT) and 364–374 (TNPLQSPVQKS). Positions 425–450 (AQQQHETAQLQHQQTTQQHATPLTPQ) are enriched in low complexity. Polar residues predominate over residues 496–511 (PSQLNINNGFNLTPTH). Positions 512–529 (RSSPVSSCCGSSSQGRSS) are enriched in low complexity.

It belongs to the V-ATPase C subunit family. As to quaternary structure, V-ATPase is a heteromultimeric enzyme made up of two complexes: the ATP-hydrolytic V1 complex and the proton translocation V0 complex. The V1 complex consists of three catalytic AB heterodimers that form a heterohexamer, three peripheral stalks each consisting of EG heterodimers, one central rotor including subunits D and F, and the regulatory subunits C and H. The proton translocation complex V0 consists of the proton transport subunit a, a ring of proteolipid subunits c9c'', rotary subunit d, subunits e and f, and the accessory subunits VhaAC45 and ATP6AP2. In larvae, expressed in the ring gland, CNS, imaginal disks and lymph gland.

Subunit of the V1 complex of vacuolar(H+)-ATPase (V-ATPase), a multisubunit enzyme composed of a peripheral complex (V1) that hydrolyzes ATP and a membrane integral complex (V0) that translocates protons. V-ATPase is responsible for acidifying and maintaining the pH of intracellular compartments and in some cell types, is targeted to the plasma membrane, where it is responsible for acidifying the extracellular environment. Subunit C is necessary for the assembly of the catalytic sector of the enzyme and is likely to have a specific function in its catalytic activity. In enterocytes, acts as part of a pHCl-2 sensory pathway which mediates Tor-dependent larval growth and metabolism in response to zinc availability. Likely acts in maintaining enterocyte lysosomal acidification which consequently promotes Tor activation at the lysosome membrane. The sequence is that of V-type proton ATPase subunit C (Vha44) from Drosophila melanogaster (Fruit fly).